Consider the following 246-residue polypeptide: tRNA (guanine-N(1)-)-methyltransferase (246 aa).

S-adenosyl-L-methionine is bound by residues Gly-113 and 133-138 (IGDYVL).

Belongs to the RNA methyltransferase TrmD family. Homodimer.

It is found in the cytoplasm. It catalyses the reaction guanosine(37) in tRNA + S-adenosyl-L-methionine = N(1)-methylguanosine(37) in tRNA + S-adenosyl-L-homocysteine + H(+). Functionally, specifically methylates guanosine-37 in various tRNAs. This Haemophilus influenzae (strain 86-028NP) protein is tRNA (guanine-N(1)-)-methyltransferase.